Here is a 348-residue protein sequence, read N- to C-terminus: PDZ and LIM domain protein 2 (348 aa).

Residues 1–84 enclose the PDZ domain; it reads MALTVDVVGP…PLRLQLDRPQ (84 aa). Residues 67–139 are disordered; it reads SKIRQSPSPL…PPTSPQAPTG (73 aa). Polar residues predominate over residues 103–118; the sequence is RFQSSRRTHTDSQASL. Phosphoserine occurs at positions 117, 119, and 124. A phosphothreonine mark is found at threonine 128 and threonine 132. Phosphoserine occurs at positions 133, 153, 191, 197, 198, 202, 209, and 262. Residues 165–202 are disordered; sequence GGRRGSRQASLSPAGDSAVLVLPPPPSPGARSSSSRLS. A compositionally biased stretch (low complexity) spans 193–202; the sequence is GARSSSSRLS. A disordered region spans residues 249-275; the sequence is ERGGTPAYLPSSLSPQSSLPTSRALAS. Positions 257–270 are enriched in low complexity; that stretch reads LPSSLSPQSSLPTS. Residues 280–340 form the LIM zinc-binding domain; sequence HTCEKCNTSI…EKHARQRYSA (61 aa).

Interacts with alpha-actinins ACTN1 and ACTN4, FLNA and MYH9. Interacts (via LIM zinc-binding domain) with MKRN2.

It localises to the cytoplasm. Its subcellular location is the cytoskeleton. Functionally, probable adapter protein located at the actin cytoskeleton that promotes cell attachment. Necessary for the migratory capacity of epithelial cells. Overexpression enhances cell adhesion to collagen and fibronectin and suppresses anchorage independent growth. May contribute to tumor cell migratory capacity. This chain is PDZ and LIM domain protein 2 (PDLIM2), found in Bos taurus (Bovine).